The sequence spans 276 residues: 3-methyl-2-oxobutanoate hydroxymethyltransferase (276 aa).

Asp45 and Asp84 together coordinate Mg(2+). Residues 45-46, Asp84, and Lys114 contribute to the 3-methyl-2-oxobutanoate site; that span reads DS. A Mg(2+)-binding site is contributed by Glu116. Catalysis depends on Glu183, which acts as the Proton acceptor.

It belongs to the PanB family. Homodecamer; pentamer of dimers. Mg(2+) serves as cofactor.

The protein localises to the cytoplasm. It carries out the reaction 3-methyl-2-oxobutanoate + (6R)-5,10-methylene-5,6,7,8-tetrahydrofolate + H2O = 2-dehydropantoate + (6S)-5,6,7,8-tetrahydrofolate. The protein operates within cofactor biosynthesis; (R)-pantothenate biosynthesis; (R)-pantoate from 3-methyl-2-oxobutanoate: step 1/2. Catalyzes the reversible reaction in which hydroxymethyl group from 5,10-methylenetetrahydrofolate is transferred onto alpha-ketoisovalerate to form ketopantoate. The sequence is that of 3-methyl-2-oxobutanoate hydroxymethyltransferase from Carboxydothermus hydrogenoformans (strain ATCC BAA-161 / DSM 6008 / Z-2901).